A 699-amino-acid polypeptide reads, in one-letter code: DNA ligase (699 aa).

Residues 47–51, 96–97, and Glu128 contribute to the NAD(+) site; these read DAQYD and SL. Catalysis depends on Lys130, which acts as the N6-AMP-lysine intermediate. NAD(+)-binding residues include Arg151, Glu186, Lys303, and Lys327. Cys422, Cys425, Cys440, and Cys446 together coordinate Zn(2+). Positions 620–699 constitute a BRCT domain; that stretch reads GDNLLLSNQT…EEWIKMVNEL (80 aa).

Belongs to the NAD-dependent DNA ligase family. LigA subfamily. The cofactor is Mg(2+). Mn(2+) is required as a cofactor.

The catalysed reaction is NAD(+) + (deoxyribonucleotide)n-3'-hydroxyl + 5'-phospho-(deoxyribonucleotide)m = (deoxyribonucleotide)n+m + AMP + beta-nicotinamide D-nucleotide.. DNA ligase that catalyzes the formation of phosphodiester linkages between 5'-phosphoryl and 3'-hydroxyl groups in double-stranded DNA using NAD as a coenzyme and as the energy source for the reaction. It is essential for DNA replication and repair of damaged DNA. The chain is DNA ligase from Orientia tsutsugamushi (strain Ikeda) (Rickettsia tsutsugamushi).